A 31-amino-acid chain; its full sequence is Cliotide T17 (31 aa).

The cyclopeptide (Gly-Asn) cross-link spans 1–31 (GTVPCGESCVFIPCITGIAGCSCKNKVCYLN). Cystine bridges form between Cys5–Cys21, Cys9–Cys23, and Cys14–Cys28.

In terms of processing, contains 3 disulfide bonds. Post-translationally, this is a cyclic peptide. As to expression, expressed in root nodules but not in seed.

Functionally, probably participates in a plant defense mechanism. In Clitoria ternatea (Butterfly pea), this protein is Cliotide T17.